The following is a 302-amino-acid chain: Citrate lyase subunit beta (302 aa).

Substrate is bound by residues Arg76 and Glu139. Mg(2+) contacts are provided by Glu139 and Asp166.

It belongs to the HpcH/HpaI aldolase family. Citrate lyase beta subunit subfamily. As to quaternary structure, oligomer with a subunit composition of (alpha,beta,gamma)6. The cofactor is Mg(2+).

The protein resides in the cytoplasm. The catalysed reaction is citrate = oxaloacetate + acetate. It catalyses the reaction (3S)-citryl-CoA = oxaloacetate + acetyl-CoA. Functionally, represents a citryl-ACP lyase. In Escherichia coli O6:H1 (strain CFT073 / ATCC 700928 / UPEC), this protein is Citrate lyase subunit beta (citE).